We begin with the raw amino-acid sequence, 166 residues long: 2-C-methyl-D-erythritol 2,4-cyclodiphosphate synthase (166 aa).

The a divalent metal cation site is built by D12 and H14. 4-CDP-2-C-methyl-D-erythritol 2-phosphate contacts are provided by residues D12–H14 and H38–S39. Residue H46 coordinates a divalent metal cation. Residues D60–G62, F65–D69, and R146 each bind 4-CDP-2-C-methyl-D-erythritol 2-phosphate.

This sequence belongs to the IspF family. In terms of assembly, homotrimer. Requires a divalent metal cation as cofactor.

The enzyme catalyses 4-CDP-2-C-methyl-D-erythritol 2-phosphate = 2-C-methyl-D-erythritol 2,4-cyclic diphosphate + CMP. Its pathway is isoprenoid biosynthesis; isopentenyl diphosphate biosynthesis via DXP pathway; isopentenyl diphosphate from 1-deoxy-D-xylulose 5-phosphate: step 4/6. Its function is as follows. Involved in the biosynthesis of isopentenyl diphosphate (IPP) and dimethylallyl diphosphate (DMAPP), two major building blocks of isoprenoid compounds. Catalyzes the conversion of 4-diphosphocytidyl-2-C-methyl-D-erythritol 2-phosphate (CDP-ME2P) to 2-C-methyl-D-erythritol 2,4-cyclodiphosphate (ME-CPP) with a corresponding release of cytidine 5-monophosphate (CMP). In Gemmatimonas aurantiaca (strain DSM 14586 / JCM 11422 / NBRC 100505 / T-27), this protein is 2-C-methyl-D-erythritol 2,4-cyclodiphosphate synthase.